Here is a 709-residue protein sequence, read N- to C-terminus: Frizzled-6 (709 aa).

Residues 1-18 (MERSPFLLACILLPLVRG) form the signal peptide. Residues 19–132 (HSLFTCEPIT…CNRLPHCDDT (114 aa)) enclose the FZ domain. The Extracellular segment spans residues 19–201 (HSLFTCEPIT…SDELDFAKSF (183 aa)). 5 disulfide bridges follow: Cys24–Cys85, Cys32–Cys78, Cys69–Cys106, Cys95–Cys129, and Cys99–Cys123. A glycan (N-linked (GlcNAc...) asparagine) is linked at Asn38. Residues 202–222 (IGIVSIFCLCATLFTFLTFLI) traverse the membrane as a helical segment. At 223–233 (DVRRFRYPERP) the chain is on the cytoplasmic side. A helical membrane pass occupies residues 234-254 (IIYYSVCYSIVSLMYFVGFLL). The Extracellular portion of the chain corresponds to 255-284 (GNSTACNKADEKLELGDTVVLGSKNKACSV). The N-linked (GlcNAc...) asparagine glycan is linked to Asn256. A helical membrane pass occupies residues 285-305 (VFMFLYFFTMAGTVWWVILTI). At 306-324 (TWFLAAGRKWSCEAIEQKA) the chain is on the cytoplasmic side. A helical membrane pass occupies residues 325-345 (VWFHAVAWGAPGFLTVMLLAM). The Extracellular segment spans residues 346–370 (NKVEGDNISGVCFVGLYDLDASRYF). Asn352 is a glycosylation site (N-linked (GlcNAc...) asparagine). The chain crosses the membrane as a helical span at residues 371–391 (VLLPLCLCVFVGLSLLLAGII). Residues 392–416 (SLNHVRQVIQHDGRNQEKLKKFMIR) lie on the Cytoplasmic side of the membrane. Residues 417–437 (IGVFSGLYLVPLVTLLGCYVY) form a helical membrane-spanning segment. The Extracellular segment spans residues 438 to 473 (ELVNRITWEMTWFSDHCHQYRIPCPYQANPKARPEL). Residues 474–494 (ALFMIKYLMTLIVGISAVFWV) traverse the membrane as a helical segment. Residues 495–709 (GSKKTCTEWA…EQGAGSHSDA (215 aa)) are Cytoplasmic-facing. The short motif at 498 to 503 (KTCTEW) is the Lys-Thr-X-X-X-Trp motif, mediates interaction with the PDZ domain of Dvl family members element. Residues 583–594 (QETSTEVHTSPE) show a composition bias toward polar residues. Residues 583–709 (QETSTEVHTS…EQGAGSHSDA (127 aa)) form a disordered region. Positions 596–616 (SVKEGRADRANTPSAKDRDCG) are enriched in basic and acidic residues. The segment covering 620 to 629 (GPSSKLSGNR) has biased composition (polar residues). Basic and acidic residues predominate over residues 630–644 (NGRESRAGGLKERSN). The residue at position 656 (Ser656) is a Phosphoserine. Positions 669-690 (CSTSQAASSPEPTSLKGSTSLP) are enriched in polar residues. The segment covering 697 to 709 (ARKEQGAGSHSDA) has biased composition (basic and acidic residues).

This sequence belongs to the G-protein coupled receptor Fz/Smo family. As to quaternary structure, interacts with LMBR1L. In terms of processing, ubiquitinated by ZNRF3, leading to its degradation by the proteasome. As to expression, expressed in both hair cells and supporting cells in the utricle, saccule, cristae and the organ of Corti in the inner ear (at protein level).

It localises to the membrane. Its subcellular location is the cell membrane. The protein resides in the cell surface. It is found in the apical cell membrane. The protein localises to the cytoplasmic vesicle membrane. It localises to the endoplasmic reticulum membrane. In terms of biological role, receptor for Wnt proteins. Most of frizzled receptors are coupled to the beta-catenin canonical signaling pathway, which leads to the activation of disheveled proteins, inhibition of GSK-3 kinase, nuclear accumulation of beta-catenin and activation of Wnt target genes. A second signaling pathway involving PKC and calcium fluxes has been seen for some family members, but it is not yet clear if it represents a distinct pathway or if it can be integrated in the canonical pathway, as PKC seems to be required for Wnt-mediated inactivation of GSK-3 kinase. Both pathways seem to involve interactions with G-proteins. Activation by Wnt5A stimulates PKC activity via a G-protein-dependent mechanism. Involved in transduction and intercellular transmission of polarity information during tissue morphogenesis and/or in differentiated tissues. Together with FZD3, is involved in the neural tube closure and plays a role in the regulation of the establishment of planar cell polarity (PCP), particularly in the orientation of asymmetric bundles of stereocilia on the apical faces of a subset of auditory and vestibular sensory cells located in the inner ear. This Mus musculus (Mouse) protein is Frizzled-6 (Fzd6).